Reading from the N-terminus, the 180-residue chain is ATP-dependent protease subunit HslV (180 aa).

The active site involves T7. Na(+) is bound by residues G165, C168, and T171.

It belongs to the peptidase T1B family. HslV subfamily. As to quaternary structure, a double ring-shaped homohexamer of HslV is capped on each side by a ring-shaped HslU homohexamer. The assembly of the HslU/HslV complex is dependent on binding of ATP.

It is found in the cytoplasm. It carries out the reaction ATP-dependent cleavage of peptide bonds with broad specificity.. Allosterically activated by HslU binding. Its function is as follows. Protease subunit of a proteasome-like degradation complex believed to be a general protein degrading machinery. This Bacillus cereus (strain G9842) protein is ATP-dependent protease subunit HslV.